A 287-amino-acid chain; its full sequence is Ribosomal RNA small subunit methyltransferase I (287 aa).

The protein belongs to the methyltransferase superfamily. RsmI family.

It is found in the cytoplasm. The enzyme catalyses cytidine(1402) in 16S rRNA + S-adenosyl-L-methionine = 2'-O-methylcytidine(1402) in 16S rRNA + S-adenosyl-L-homocysteine + H(+). Catalyzes the 2'-O-methylation of the ribose of cytidine 1402 (C1402) in 16S rRNA. The protein is Ribosomal RNA small subunit methyltransferase I of Streptococcus pyogenes serotype M1.